The sequence spans 190 residues: Peptidyl-tRNA hydrolase (190 aa).

F14 is a binding site for tRNA. H19 functions as the Proton acceptor in the catalytic mechanism. The tRNA site is built by M64, N66, and N112.

It belongs to the PTH family. In terms of assembly, monomer.

Its subcellular location is the cytoplasm. The enzyme catalyses an N-acyl-L-alpha-aminoacyl-tRNA + H2O = an N-acyl-L-amino acid + a tRNA + H(+). In terms of biological role, hydrolyzes ribosome-free peptidyl-tRNAs (with 1 or more amino acids incorporated), which drop off the ribosome during protein synthesis, or as a result of ribosome stalling. Functionally, catalyzes the release of premature peptidyl moieties from peptidyl-tRNA molecules trapped in stalled 50S ribosomal subunits, and thus maintains levels of free tRNAs and 50S ribosomes. In Staphylococcus saprophyticus subsp. saprophyticus (strain ATCC 15305 / DSM 20229 / NCIMB 8711 / NCTC 7292 / S-41), this protein is Peptidyl-tRNA hydrolase.